A 245-amino-acid polypeptide reads, in one-letter code: 1-(5-phosphoribosyl)-5-[(5-phosphoribosylamino)methylideneamino] imidazole-4-carboxamide isomerase (245 aa).

The active-site Proton acceptor is D8. D131 serves as the catalytic Proton donor.

This sequence belongs to the HisA/HisF family.

The protein resides in the cytoplasm. It catalyses the reaction 1-(5-phospho-beta-D-ribosyl)-5-[(5-phospho-beta-D-ribosylamino)methylideneamino]imidazole-4-carboxamide = 5-[(5-phospho-1-deoxy-D-ribulos-1-ylimino)methylamino]-1-(5-phospho-beta-D-ribosyl)imidazole-4-carboxamide. The protein operates within amino-acid biosynthesis; L-histidine biosynthesis; L-histidine from 5-phospho-alpha-D-ribose 1-diphosphate: step 4/9. The polypeptide is 1-(5-phosphoribosyl)-5-[(5-phosphoribosylamino)methylideneamino] imidazole-4-carboxamide isomerase (Neisseria meningitidis serogroup C / serotype 2a (strain ATCC 700532 / DSM 15464 / FAM18)).